Reading from the N-terminus, the 136-residue chain is Magnetite biomineralization protein Mms6 (136 aa).

Topologically, residues 1 to 85 (MGEMEREGAT…AVGGTIWSGK (85 aa)) are cytoplasmic. The tract at residues 86-95 (GLALGLGMGL) is GL repeat. A helical transmembrane segment spans residues 86–106 (GLALGLGMGLGAWGPLILGVV). The Lumenal portion of the chain corresponds to 107–136 (GAGAVYAYMKSRDIEAAQSDEEVELRDALS). An MIC, self-assembles, binds magnetite, Fe(2+) and Fe(3+) region spans residues 115 to 136 (MKSRDIEAAQSDEEVELRDALS).

The protein belongs to the magnetosome Mms6 family. As to quaternary structure, full length protein oligomerizes and interacts with MamA. Post-translationally, may undergo cleavage.

The protein resides in the magnetosome membrane. In terms of biological role, promotes the formation of magnetite in Fe(2+)-rich conditions, when magnetite is not readily formed. Binds both Fe(2+) and Fe(3+). May help control the production of crystals with a specific morphology. May function with MamX, MamY amd MamZ in biomineralization. The 4 genes of this operon collectively influence magnetosome size and number. The protein is Magnetite biomineralization protein Mms6 of Magnetospirillum gryphiswaldense (strain DSM 6361 / JCM 21280 / NBRC 15271 / MSR-1).